The sequence spans 137 residues: Structural protein A137R (137 aa).

The protein belongs to the asfivirus A137R family. As to quaternary structure, interacts with host TBK1.

It localises to the virion. It is found in the host cytoplasm. Functionally, plays a role in the inhibition of the host innate immune response. Mechanistically, promotes the autophagy-mediated lysosomal degradation of host TBK1 and affects IRF3 nuclear translocation to block type I IFN production. In Ornithodoros (relapsing fever ticks), this protein is Structural protein A137R.